The sequence spans 449 residues: Methionine aminopeptidase 2-2 (449 aa).

The tract at residues 1-91 (MAAQAAPELA…PRIPLTTLFP (91 aa)) is disordered. The segment covering 15–28 (NKNTGSAEASTVPA) has biased composition (polar residues). Over residues 34 to 50 (DDAENEGDSDDDRDDEQ) the composition is skewed to acidic residues. The span at 61 to 75 (KKKKKKRPKKKKKTA) shows a compositional bias: basic residues. Residue histidine 199 coordinates substrate. Residues aspartate 219, aspartate 230, and histidine 299 each coordinate a divalent metal cation. Histidine 307 is a binding site for substrate. 2 residues coordinate a divalent metal cation: glutamate 335 and glutamate 430.

It belongs to the peptidase M24A family. Methionine aminopeptidase eukaryotic type 2 subfamily. Co(2+) is required as a cofactor. It depends on Zn(2+) as a cofactor. Requires Mn(2+) as cofactor. The cofactor is Fe(2+).

It localises to the cytoplasm. The catalysed reaction is Release of N-terminal amino acids, preferentially methionine, from peptides and arylamides.. In terms of biological role, cotranslationally removes the N-terminal methionine from nascent proteins. The N-terminal methionine is often cleaved when the second residue in the primary sequence is small and uncharged (Met-Ala-, Cys, Gly, Pro, Ser, Thr, or Val). The sequence is that of Methionine aminopeptidase 2-2 from Arthroderma gypseum (strain ATCC MYA-4604 / CBS 118893) (Microsporum gypseum).